Reading from the N-terminus, the 366-residue chain is tRNA/tmRNA (uracil-C(5))-methyltransferase (366 aa).

The S-adenosyl-L-methionine site is built by glutamine 190, tyrosine 218, asparagine 223, glutamate 239, and aspartate 299. Cysteine 324 serves as the catalytic Nucleophile. Residue glutamate 358 is the Proton acceptor of the active site.

Belongs to the class I-like SAM-binding methyltransferase superfamily. RNA M5U methyltransferase family. TrmA subfamily.

The catalysed reaction is uridine(54) in tRNA + S-adenosyl-L-methionine = 5-methyluridine(54) in tRNA + S-adenosyl-L-homocysteine + H(+). The enzyme catalyses uridine(341) in tmRNA + S-adenosyl-L-methionine = 5-methyluridine(341) in tmRNA + S-adenosyl-L-homocysteine + H(+). Functionally, dual-specificity methyltransferase that catalyzes the formation of 5-methyluridine at position 54 (m5U54) in all tRNAs, and that of position 341 (m5U341) in tmRNA (transfer-mRNA). The sequence is that of tRNA/tmRNA (uracil-C(5))-methyltransferase from Cellvibrio japonicus (strain Ueda107) (Pseudomonas fluorescens subsp. cellulosa).